Here is a 244-residue protein sequence, read N- to C-terminus: Ferric aerobactin reductase IutB (244 aa).

[2Fe-2S] cluster-binding residues include Cys220, Cys221, Cys232, and Cys235.

In terms of assembly, monomer. [2Fe-2S] cluster is required as a cofactor.

It localises to the cytoplasm. The enzyme catalyses 2 a Fe(II)-siderophore + NAD(+) + H(+) = 2 a Fe(III)-siderophore + NADH. It carries out the reaction 2 a Fe(II)-siderophore + NADP(+) + H(+) = 2 a Fe(III)-siderophore + NADPH. Functionally, ferric-siderophore reductase involved in iron removal from the siderophores after their transport into the cell. Acts as a major ferric-aerobactin reductase catalyzing the reduction of Fe(3+)-aerobactin, a citrate-hydroxamate siderophore produced by other bacteria. Catalyzes reduction of Fe(3+)-vulnibactin, a catecholate siderophore synthesized by V.vulnificus, in the absence of VuuB. Catalyzes reduction of ferrioxamine B and Fe(3+)-vibriobactin in vitro. No activity with Fe(3+)-enterobactin. Catalyzes reduction of ferric chelating compound Fe(3+)-nitrilotriacetic acid (NTA) in the presence of NADH, NADPH or reduced glutathione (GSH) as its electron donor in vitro. Also catalyzes reduction of ferric chelating compounds Fe(3+)-citrate and Fe(3+)-EDTA as well as non-complexed FeCl3 in the presence of GSH as its electron donor in vitro. Highest activity with Fe(3+)-NTA as electron acceptor and GSH as donor. The chain is Ferric aerobactin reductase IutB from Vibrio vulnificus.